Here is a 745-residue protein sequence, read N- to C-terminus: uncharacterized protein (745 aa).

The 99-residue stretch at 158 to 256 folds into the HTH araC/xylS-type domain; that stretch reads NQVCDYIELH…HQTPKQYRGD (99 aa). 2 consecutive DNA-binding regions (H-T-H motif) follow at residues 175–196 and 223–246; these read SELS…TESL and ITDI…KHFT.

This is an uncharacterized protein from Staphylococcus aureus (strain MW2).